The chain runs to 310 residues: Cysteine synthase (310 aa).

N6-(pyridoxal phosphate)lysine is present on lysine 44. Pyridoxal 5'-phosphate is bound by residues asparagine 74, 179–183 (GTGGT), and serine 267.

This sequence belongs to the cysteine synthase/cystathionine beta-synthase family. Requires pyridoxal 5'-phosphate as cofactor.

It carries out the reaction O-acetyl-L-serine + hydrogen sulfide = L-cysteine + acetate. It functions in the pathway amino-acid biosynthesis; L-cysteine biosynthesis; L-cysteine from L-serine: step 2/2. The chain is Cysteine synthase (cysK) from Neisseria meningitidis serogroup B (strain ATCC BAA-335 / MC58).